Here is a 209-residue protein sequence, read N- to C-terminus: Uracil phosphoribosyltransferase (209 aa).

Residues arginine 79, arginine 104, and 131–139 (DPMLATGGS) contribute to the 5-phospho-alpha-D-ribose 1-diphosphate site. Uracil contacts are provided by residues isoleucine 194 and 199-201 (GDA). Aspartate 200 is a binding site for 5-phospho-alpha-D-ribose 1-diphosphate.

Belongs to the UPRTase family. Requires Mg(2+) as cofactor.

The enzyme catalyses UMP + diphosphate = 5-phospho-alpha-D-ribose 1-diphosphate + uracil. It participates in pyrimidine metabolism; UMP biosynthesis via salvage pathway; UMP from uracil: step 1/1. Allosterically activated by GTP. Catalyzes the conversion of uracil and 5-phospho-alpha-D-ribose 1-diphosphate (PRPP) to UMP and diphosphate. The sequence is that of Uracil phosphoribosyltransferase from Streptococcus pneumoniae (strain ATCC BAA-255 / R6).